Reading from the N-terminus, the 474-residue chain is Vasculin-like protein 1 (474 aa).

The disordered stretch occupies residues 17–42 (QSAKSPTATFEKHGEHLPRGEGRFGV). Basic and acidic residues predominate over residues 26–38 (FEKHGEHLPRGEG). Phosphoserine occurs at positions 49 and 76. Positions 91-191 (GNPSGWHSSS…VWENPPSAKQ (101 aa)) are disordered. Basic residues predominate over residues 116–128 (NHRHWNGSFHSRK). Basic and acidic residues predominate over residues 136-154 (PPMEIREEKKEDKVEKLQF). The residue at position 202 (S202) is a Phosphoserine. Residues 238–371 (LVPKPVPPPS…EEGCHQNGLA (134 aa)) are disordered. Polar residues predominate over residues 262–277 (GSLSSSRESAFTSPIS). Residues 291-312 (SSPKESPSSTTPPIEISSSRLT) are compositionally biased toward low complexity. Position 292 is a phosphoserine (S292). T301 bears the Phosphothreonine mark. Composition is skewed to basic and acidic residues over residues 317–346 (RTTD…CDKL) and 356–365 (EPKENGEEGC). At S382 the chain carries Phosphoserine. Residues 453-474 (AEFEDSDTETSSSETSDDDAWK) form a disordered region.

Belongs to the vasculin family.

The protein resides in the nucleus. In terms of biological role, possible transcription factor. The polypeptide is Vasculin-like protein 1 (GPBP1L1) (Homo sapiens (Human)).